The following is a 439-amino-acid chain: Acyl-lipid (8-3)-desaturase (439 aa).

A Cytochrome b5 heme-binding domain is found at 7–88; the sequence is GRSAAREMTA…LPKLDASKVE (82 aa). 2 residues coordinate heme: histidine 40 and histidine 66. The chain crosses the membrane as a helical span at residues 123–143; it reads IPHMIYRVVEIVALFALSFWL. Residues 171-175 carry the Histidine box-1 motif; the sequence is HEMGH. A Histidine box-2 motif is present at residues 208 to 213; it reads HSKHHA. A run of 3 helical transmembrane segments spans residues 254-274, 287-307, and 312-332; these read AYLFAPVSCLLIGLGWTLYLH, FVWIFARYIGWFSLMGALGYS, and VGMYLCSFGLGCIYIFLQFAV. Positions 376–380 match the Histidine box-3 motif; the sequence is QIEHH.

Belongs to the fatty acid desaturase type 1 family. The cofactor is Fe(2+).

It is found in the membrane. The enzyme catalyses an (8Z,11Z,14Z)-icosatrienoyl-containing glycerolipid + 2 Fe(II)-[cytochrome b5] + O2 + 2 H(+) = (5Z,8Z,11Z,14Z)-eicosatetraenoyl-containing glycerolipid + 2 Fe(III)-[cytochrome b5] + 2 H2O. It catalyses the reaction an (8Z,11Z,14Z,17Z)-eicosatetraenoyl-containing glycerolipid + 2 Fe(II)-[cytochrome b5] + O2 + 2 H(+) = a (5Z,8Z,11Z,14Z,17Z)-eicosapentaenoyl-containing glycerolipid + 2 Fe(III)-[cytochrome b5] + 2 H2O. Functionally, fatty acid desaturase that introduces a cis double bond at the 5-position in 20-carbon polyunsaturated fatty acids incorporated in a glycerolipid that contain a Delta(8) double bond. The protein is Acyl-lipid (8-3)-desaturase of Thraustochytrium sp.